The primary structure comprises 286 residues: Nucleotide-binding protein Tgr7_0722 (286 aa).

ATP is bound at residue 8–15 (GLSGSGKS). 60 to 63 (DVRS) contacts GTP.

Belongs to the RapZ-like family.

Its function is as follows. Displays ATPase and GTPase activities. In Thioalkalivibrio sulfidiphilus (strain HL-EbGR7), this protein is Nucleotide-binding protein Tgr7_0722.